The sequence spans 494 residues: mRNA decay activator protein ZFP36L2 (494 aa).

Serine 57 carries the post-translational modification Phosphoserine. Residues 93 to 113 (GGPTSYGTLKEPSGGGGTALL) form a disordered region. Residue serine 125 is modified to Phosphoserine. Residues 153 to 158 (RYKTEL) carry the RNA-binding motif. C3H1-type zinc fingers lie at residues 153 to 181 (RYKT…HGFH) and 191 to 219 (KYKT…HNAD). The interval 170–211 (YGEKCQFAHGFHELRSLTRHPKYKTELCRTFHTIGFCPYGPR) is RNA-binding. At threonine 238 the chain carries Phosphothreonine. Disordered stretches follow at residues 257 to 293 (SLSF…PPSC) and 397 to 494 (QQQQ…ISDD). The span at 406–415 (PAQPPAPPSA) shows a compositional bias: pro residues. Composition is skewed to low complexity over residues 416-435 (TLPA…QLPR) and 459-478 (YLSG…PSLD). Phosphoserine; by RPS6KA1 occurs at positions 490 and 492.

Associates with the cytoplasmic CCR4-NOT deadenylase to trigger ARE-containing mRNA deadenylation and decay processes. Interacts with CNOT7; this interaction is inhibited in response to phorbol 12-myristate 13-acetate (PMA) treatment in a p38 MAPK-dependent manner. Interacts with CNOT6L. Phosphorylated by RPS6KA1 at Ser-490 and Ser-492 upon phorbol 12-myristate 13-acetate (PMA) treatment; this phosphorylation results in dissociation of the CCR4-NOT-deadenylase complex and induces p38 MAPK-mediated stabilization of the low-density lipoprotein (LDL) receptor (LDLR) mRNA. Phosphorylation occurs during early preadipocyte differentiation. In terms of tissue distribution, expressed mainly in the basal epidermal layer, weakly in the suprabasal epidermal layers. Expressed in epidermal keratinocytes (at protein level). Expressed in oocytes.

The protein resides in the nucleus. It is found in the cytoplasm. Zinc-finger RNA-binding protein that destabilizes several cytoplasmic AU-rich element (ARE)-containing mRNA transcripts by promoting their poly(A) tail removal or deadenylation, and hence provide a mechanism for attenuating protein synthesis. Acts as a 3'-untranslated region (UTR) ARE mRNA-binding adapter protein to communicate signaling events to the mRNA decay machinery. Functions by recruiting the CCR4-NOT deadenylase complex and probably other components of the cytoplasmic RNA decay machinery to the bound ARE-containing mRNAs, and hence promotes ARE-mediated mRNA deadenylation and decay processes. Binds to 3'-UTR ARE of numerous mRNAs. Promotes ARE-containing mRNA decay of the low-density lipoprotein (LDL) receptor (LDLR) mRNA in response to phorbol 12-myristate 13-acetate (PMA) treatment in a p38 MAPK-dependent manner. Positively regulates early adipogenesis by promoting ARE-mediated mRNA decay of immediate early genes (IEGs). Plays a role in mature peripheral neuron integrity by promoting ARE-containing mRNA decay of the transcriptional repressor REST mRNA. Plays a role in ovulation and oocyte meiotic maturation by promoting ARE-mediated mRNA decay of the luteinizing hormone receptor LHCGR mRNA. Acts as a negative regulator of erythroid cell differentiation: promotes glucocorticoid-induced self-renewal of erythroid cells by binding mRNAs that are induced or highly expressed during terminal erythroid differentiation and promotes their degradation, preventing erythroid cell differentiation. In association with ZFP36L1 maintains quiescence on developing B lymphocytes by promoting ARE-mediated decay of several mRNAs encoding cell cycle regulators that help B cells progress through the cell cycle, and hence ensuring accurate variable-diversity-joining (VDJ) recombination process and functional immune cell formation. Together with ZFP36L1 is also necessary for thymocyte development and prevention of T-cell acute lymphoblastic leukemia (T-ALL) transformation by promoting ARE-mediated mRNA decay of the oncogenic transcription factor NOTCH1 mRNA. The chain is mRNA decay activator protein ZFP36L2 from Homo sapiens (Human).